The sequence spans 432 residues: MSLSPKQEQLFKQASKHIPGGVNSPVRAFNGVGGTPVFIEKAKGAYLWDVDGKRYVDYVGSWGPMILGHAHPDIIKAVQTAAEDGLSFGAPTVHETTLADIICEIMPSIELVRMTNSGTEATMTAIRLARGYTGRDKIVKFEGCYHGHSDSLLVKAGSGLLTKGEGEPTSKGVPADFAKHTLTLPYNDIAALKECFAKFGHEIAGVIIEPVAGNMNMVKPIDGFLQAIRDVCDEYKSVFIIDEVMTGFRVALGGAQSVYNVKPDLTTLGKIIGAGLPVGAFGGKREIMECIAPLGGVYQAGTLSGNPLAMRAGIEMFKHLRQPDFYSKLSAQLEKLLAGLQAAADEAGIPFKTQQAGAMFGLYFTDQEDITSFDSMLACDIEAFKKFFHGMLKRGVNLAPSAFEAGFISSAHSDEDIEFTIQAAKETFAEMK.

The residue at position 270 (K270) is an N6-(pyridoxal phosphate)lysine.

This sequence belongs to the class-III pyridoxal-phosphate-dependent aminotransferase family. HemL subfamily. In terms of assembly, homodimer. Requires pyridoxal 5'-phosphate as cofactor.

It localises to the cytoplasm. The enzyme catalyses (S)-4-amino-5-oxopentanoate = 5-aminolevulinate. It functions in the pathway porphyrin-containing compound metabolism; protoporphyrin-IX biosynthesis; 5-aminolevulinate from L-glutamyl-tRNA(Glu): step 2/2. The sequence is that of Glutamate-1-semialdehyde 2,1-aminomutase from Acinetobacter baumannii (strain ATCC 17978 / DSM 105126 / CIP 53.77 / LMG 1025 / NCDC KC755 / 5377).